Consider the following 92-residue polypeptide: Acylphosphatase (92 aa).

The Acylphosphatase-like domain maps to Arg6 to Arg92. Residues Arg21 and Asn39 contribute to the active site.

It belongs to the acylphosphatase family.

It carries out the reaction an acyl phosphate + H2O = a carboxylate + phosphate + H(+). This chain is Acylphosphatase (acyP), found in Natronomonas pharaonis (strain ATCC 35678 / DSM 2160 / CIP 103997 / JCM 8858 / NBRC 14720 / NCIMB 2260 / Gabara) (Halobacterium pharaonis).